Consider the following 117-residue polypeptide: Protein Aeq5-like2 (117 aa).

The Cytoplasmic portion of the chain corresponds to 1–36 (MLVNARAIRQSIGIVVAQCRRDLESNRTLDYRTRMR). A helical transmembrane segment spans residues 37 to 56 (TSLILVAMVMVSVLLPYTYG). Over 57 to 117 (SSCDSFCTEQ…RFTKEPTEES (61 aa)) the chain is Extracellular. Intrachain disulfides connect Cys-59/Cys-94, Cys-63/Cys-90, Cys-70/Cys-83, and Cys-74/Cys-80.

The mature peptide may be cleaved at a dibasic residue site and be shorter than the sequence shown (possibly residues 1-94). Expressed in endodermal ganglion neurons, apparently bipolar and following mesentery folds (observed in both planulae and primary polyps). It not expressed in nematocytes.

The protein resides in the membrane. The sequence is that of Protein Aeq5-like2 from Nematostella vectensis (Starlet sea anemone).